Reading from the N-terminus, the 503-residue chain is Aspartyl/glutamyl-tRNA(Asn/Gln) amidotransferase subunit B (503 aa).

Belongs to the GatB/GatE family. GatB subfamily. As to quaternary structure, heterotrimer of A, B and C subunits.

The catalysed reaction is L-glutamyl-tRNA(Gln) + L-glutamine + ATP + H2O = L-glutaminyl-tRNA(Gln) + L-glutamate + ADP + phosphate + H(+). It carries out the reaction L-aspartyl-tRNA(Asn) + L-glutamine + ATP + H2O = L-asparaginyl-tRNA(Asn) + L-glutamate + ADP + phosphate + 2 H(+). In terms of biological role, allows the formation of correctly charged Asn-tRNA(Asn) or Gln-tRNA(Gln) through the transamidation of misacylated Asp-tRNA(Asn) or Glu-tRNA(Gln) in organisms which lack either or both of asparaginyl-tRNA or glutaminyl-tRNA synthetases. The reaction takes place in the presence of glutamine and ATP through an activated phospho-Asp-tRNA(Asn) or phospho-Glu-tRNA(Gln). This Cereibacter sphaeroides (strain KD131 / KCTC 12085) (Rhodobacter sphaeroides) protein is Aspartyl/glutamyl-tRNA(Asn/Gln) amidotransferase subunit B.